Reading from the N-terminus, the 146-residue chain is Hemoglobin subunit beta (146 aa).

Val-1 is modified (N-acetylvaline). In terms of domain architecture, Globin spans His-2–His-146. His-63 is a heme b binding site. Lys-82 bears the N6-acetyllysine mark. His-92 lines the heme b pocket. An S-nitrosocysteine modification is found at Cys-93. N6-acetyllysine is present on Lys-144.

It belongs to the globin family. As to quaternary structure, heterotetramer of two alpha chains and two beta chains. Red blood cells.

Involved in oxygen transport from the lung to the various peripheral tissues. In Mesocricetus brandti (Brandt's hamster), this protein is Hemoglobin subunit beta (HBB).